The sequence spans 128 residues: Large ribosomal subunit protein bL20c (128 aa).

The protein belongs to the bacterial ribosomal protein bL20 family.

The protein localises to the plastid. It localises to the chloroplast. Binds directly to 23S ribosomal RNA and is necessary for the in vitro assembly process of the 50S ribosomal subunit. It is not involved in the protein synthesizing functions of that subunit. The polypeptide is Large ribosomal subunit protein bL20c (Trachelium caeruleum (Blue throatwort)).